The primary structure comprises 161 residues: ATP synthase subunit b 1 (161 aa).

Residues 1–21 form a helical membrane-spanning segment; that stretch reads MFATAEFWILACLVAFFAILG.

It belongs to the ATPase B chain family. In terms of assembly, F-type ATPases have 2 components, F(1) - the catalytic core - and F(0) - the membrane proton channel. F(1) has five subunits: alpha(3), beta(3), gamma(1), delta(1), epsilon(1). F(0) has three main subunits: a(1), b(2) and c(10-14). The alpha and beta chains form an alternating ring which encloses part of the gamma chain. F(1) is attached to F(0) by a central stalk formed by the gamma and epsilon chains, while a peripheral stalk is formed by the delta and b chains.

The protein resides in the cell inner membrane. In terms of biological role, f(1)F(0) ATP synthase produces ATP from ADP in the presence of a proton or sodium gradient. F-type ATPases consist of two structural domains, F(1) containing the extramembraneous catalytic core and F(0) containing the membrane proton channel, linked together by a central stalk and a peripheral stalk. During catalysis, ATP synthesis in the catalytic domain of F(1) is coupled via a rotary mechanism of the central stalk subunits to proton translocation. Functionally, component of the F(0) channel, it forms part of the peripheral stalk, linking F(1) to F(0). This Parvibaculum lavamentivorans (strain DS-1 / DSM 13023 / NCIMB 13966) protein is ATP synthase subunit b 1.